The chain runs to 61 residues: Small ribosomal subunit protein uS14 (61 aa).

Over residues 1–12 (MSESETTDEPDS) the composition is skewed to acidic residues. Positions 1 to 25 (MSESETTDEPDSETASSERTGQLES) are disordered. Residues cysteine 26, cysteine 29, cysteine 44, and cysteine 47 each contribute to the Zn(2+) site.

The protein belongs to the universal ribosomal protein uS14 family. Zinc-binding uS14 subfamily. As to quaternary structure, part of the 30S ribosomal subunit. Zn(2+) is required as a cofactor.

Functionally, binds 16S rRNA, required for the assembly of 30S particles. This chain is Small ribosomal subunit protein uS14, found in Haloarcula marismortui (strain ATCC 43049 / DSM 3752 / JCM 8966 / VKM B-1809) (Halobacterium marismortui).